The following is a 508-amino-acid chain: Photosystem II CP47 reaction center protein (508 aa).

The next 6 helical transmembrane spans lie at 21–36 (SVHIMHTALVAGWAGS), 101–115 (IVFSGLCFLAAIWHW), 140–156 (GIHLFLSGVACFGFGAF), 203–218 (IAAGTLGILAGLFHLS), 237–252 (VLSSSIAAVFFAAFVV), and 457–472 (SFALLFFFGHIWHGAR).

This sequence belongs to the PsbB/PsbC family. PsbB subfamily. PSII is composed of 1 copy each of membrane proteins PsbA, PsbB, PsbC, PsbD, PsbE, PsbF, PsbH, PsbI, PsbJ, PsbK, PsbL, PsbM, PsbT, PsbX, PsbY, PsbZ, Psb30/Ycf12, at least 3 peripheral proteins of the oxygen-evolving complex and a large number of cofactors. It forms dimeric complexes. Binds multiple chlorophylls. PSII binds additional chlorophylls, carotenoids and specific lipids. is required as a cofactor.

The protein resides in the plastid. It is found in the chloroplast thylakoid membrane. Its function is as follows. One of the components of the core complex of photosystem II (PSII). It binds chlorophyll and helps catalyze the primary light-induced photochemical processes of PSII. PSII is a light-driven water:plastoquinone oxidoreductase, using light energy to abstract electrons from H(2)O, generating O(2) and a proton gradient subsequently used for ATP formation. The chain is Photosystem II CP47 reaction center protein from Morus indica (Mulberry).